We begin with the raw amino-acid sequence, 169 residues long: uncharacterized protein (169 aa).

The protein resides in the mitochondrion. This is an uncharacterized protein from Paramecium tetraurelia.